We begin with the raw amino-acid sequence, 181 residues long: MTMENNAEFNRRLEYVGTIATMMKRTLNVLRQQGYCTQQDADSLCVSDDTAAWLCGRLPTCNFVSFRVHIDQFEHPNPALEYFKFEESLAQRQHVGPRYTYMNYTLFKNVVALKLVVYTRTLQANMYADGLPYFVQNFSETSYKHVRVYVRKLGAIQVATLSVYEQIIEDTINELVVNHVD.

Plays a role in late gene expression. The polypeptide is Protein AC41 (AC41) (Autographa californica nuclear polyhedrosis virus (AcMNPV)).